The chain runs to 1300 residues: Nephrocystin-3 (1300 aa).

The stretch at 82–183 (KNNEVASMQK…LQRLQAQGIQ (102 aa)) forms a coiled coil. TPR repeat units lie at residues 443–476 (TMEDDDYGDVLWDVHDEQEQMEAYQQASQSICEL), 916–949 (ADLYETLGRFLKDLGLLSQAVTPLQRSLEIRETA), 958–991 (AQSLHQLAGVYMQSKKFGNAEQLYKQALEISENA), 1000–1033 (ARELDALAVLYQKQNKFEQAEQLRKKSLKIRQKS), 1066–1099 (ARTLNELGVLYYLQNNLETAETFLKRSLEMRERV), 1108–1141 (AQSINNLAALYNEKKQYDKAEELYERALDIRRRA), 1150–1183 (AYTVKHLAVLYKRKGKLDKAVPLYELAVDIRQKS), 1192–1225 (ATALVNLAVLYCQMKKQDDALPLYERAMKIYEDS), and 1234–1267 (GETLKNLAVLRYEEGDYEKAAELYKRAMEIKETE). Residues 1268–1288 (TSVLGAKAPSGHSSSGGDTYS) are disordered. Polar residues predominate over residues 1278–1288 (GHSSSGGDTYS).

The protein localises to the cell projection. It is found in the cilium. Required for normal ciliary development and function. Inhibits disheveled-1-induced canonical Wnt-signaling activity and may also play a role in the control of non-canonical Wnt signaling that regulates planar cell polarity. Probably acts as a molecular switch between different Wnt signaling pathways. Required for proper convergent extension cell movements. This chain is Nephrocystin-3 (nphp3), found in Xenopus laevis (African clawed frog).